Here is a 366-residue protein sequence, read N- to C-terminus: D-alanine--D-alanine ligase (366 aa).

In terms of domain architecture, ATP-grasp spans 144–347 (KRLLKDAGLK…YRELIENLIE (204 aa)). ATP is bound at residue 174–229 (KEELGLPMFIKPANQGSSVGVHKVENEEQFYSAIKDAFQFDHKLLVEEAIVGREIE). D301, E314, and N316 together coordinate Mg(2+).

It belongs to the D-alanine--D-alanine ligase family. The cofactor is Mg(2+). Mn(2+) is required as a cofactor.

The protein resides in the cytoplasm. It carries out the reaction 2 D-alanine + ATP = D-alanyl-D-alanine + ADP + phosphate + H(+). The protein operates within cell wall biogenesis; peptidoglycan biosynthesis. In terms of biological role, cell wall formation. The polypeptide is D-alanine--D-alanine ligase (Oceanobacillus iheyensis (strain DSM 14371 / CIP 107618 / JCM 11309 / KCTC 3954 / HTE831)).